The sequence spans 64 residues: Large ribosomal subunit protein bL35 (64 aa).

Positions 1–31 are disordered; the sequence is MPKMKTHSGAKKRFKLTGTGKLKRQQANRRH.

The protein belongs to the bacterial ribosomal protein bL35 family.

The polypeptide is Large ribosomal subunit protein bL35 (Paenarthrobacter aurescens (strain TC1)).